A 702-amino-acid chain; its full sequence is Protein-glucosylgalactosylhydroxylysine glucosidase (702 aa).

310–311 (WD) contributes to the substrate binding site. The Proton donor role is filled by E440. 508-509 (KQ) is a binding site for substrate.

This sequence belongs to the glycosyl hydrolase 65 family.

It catalyses the reaction (5R)-5-O-[alpha-D-glucosyl-(1-&gt;2)-beta-D-galactosyl]-5-hydroxy-L-lysyl-[collagen] + H2O = (5R)-5-O-(beta-D-galactosyl)-5-hydroxy-L-lysyl-[collagen] + D-glucose. Functionally, catalyzes the hydrolysis of glucose from the disaccharide unit linked to hydroxylysine residues of collagen and collagen-like proteins. This Gallus gallus (Chicken) protein is Protein-glucosylgalactosylhydroxylysine glucosidase.